Reading from the N-terminus, the 337-residue chain is tRNA N6-adenosine threonylcarbamoyltransferase (337 aa).

Fe cation contacts are provided by histidine 114 and histidine 118. Substrate contacts are provided by residues 136–140 (LVSGG), aspartate 169, glycine 182, aspartate 186, and asparagine 275. Residue aspartate 301 participates in Fe cation binding.

This sequence belongs to the KAE1 / TsaD family. Fe(2+) serves as cofactor.

It localises to the cytoplasm. The enzyme catalyses L-threonylcarbamoyladenylate + adenosine(37) in tRNA = N(6)-L-threonylcarbamoyladenosine(37) in tRNA + AMP + H(+). Functionally, required for the formation of a threonylcarbamoyl group on adenosine at position 37 (t(6)A37) in tRNAs that read codons beginning with adenine. Is involved in the transfer of the threonylcarbamoyl moiety of threonylcarbamoyl-AMP (TC-AMP) to the N6 group of A37, together with TsaE and TsaB. TsaD likely plays a direct catalytic role in this reaction. This chain is tRNA N6-adenosine threonylcarbamoyltransferase, found in Streptococcus thermophilus (strain ATCC BAA-491 / LMD-9).